The sequence spans 132 residues: Small ribosomal subunit protein uS8 (132 aa).

It belongs to the universal ribosomal protein uS8 family. In terms of assembly, part of the 30S ribosomal subunit. Contacts proteins S5 and S12.

One of the primary rRNA binding proteins, it binds directly to 16S rRNA central domain where it helps coordinate assembly of the platform of the 30S subunit. The chain is Small ribosomal subunit protein uS8 from Oceanobacillus iheyensis (strain DSM 14371 / CIP 107618 / JCM 11309 / KCTC 3954 / HTE831).